A 96-amino-acid polypeptide reads, in one-letter code: Putative pterin-4-alpha-carbinolamine dehydratase (96 aa).

It belongs to the pterin-4-alpha-carbinolamine dehydratase family.

It catalyses the reaction (4aS,6R)-4a-hydroxy-L-erythro-5,6,7,8-tetrahydrobiopterin = (6R)-L-erythro-6,7-dihydrobiopterin + H2O. The sequence is that of Putative pterin-4-alpha-carbinolamine dehydratase from Prochlorococcus marinus subsp. pastoris (strain CCMP1986 / NIES-2087 / MED4).